A 162-amino-acid polypeptide reads, in one-letter code: Class I hydrophobin dewC (162 aa).

The first 21 residues, Met1–Ala21, serve as a signal peptide directing secretion. 4 disulfides stabilise this stretch: Cys43-Cys119, Cys50-Cys113, Cys51-Cys90, and Cys120-Cys156.

This sequence belongs to the fungal hydrophobin family. As to quaternary structure, self-assembles to form functional amyloid fibrils called rodlets. Self-assembly into fibrillar rodlets occurs spontaneously at hydrophobic:hydrophilic interfaces and the rodlets further associate laterally to form amphipathic monolayers.

It is found in the secreted. The protein localises to the spore wall. Aerial growth, conidiation, and dispersal of filamentous fungi in the environment rely upon a capability of their secreting small amphipathic proteins called hydrophobins (HPBs) with low sequence identity. Class I can self-assemble into an outermost layer of rodlet bundles on aerial cell surfaces, conferring cellular hydrophobicity that supports fungal growth, development and dispersal; whereas Class II form highly ordered films at water-air interfaces through intermolecular interactions but contribute nothing to the rodlet structure. DewC is a class I hydrophobin that contributes to the hydrophobicity of the spore surface. This Emericella nidulans (strain FGSC A4 / ATCC 38163 / CBS 112.46 / NRRL 194 / M139) (Aspergillus nidulans) protein is Class I hydrophobin dewC.